Consider the following 180-residue polypeptide: Segregation and condensation protein B (180 aa).

This sequence belongs to the ScpB family. As to quaternary structure, homodimer. Homodimerization may be required to stabilize the binding of ScpA to the Smc head domains. Component of a cohesin-like complex composed of ScpA, ScpB and the Smc homodimer, in which ScpA and ScpB bind to the head domain of Smc. The presence of the three proteins is required for the association of the complex with DNA.

It localises to the cytoplasm. Participates in chromosomal partition during cell division. May act via the formation of a condensin-like complex containing Smc and ScpA that pull DNA away from mid-cell into both cell halves. The sequence is that of Segregation and condensation protein B from Staphylococcus epidermidis (strain ATCC 35984 / DSM 28319 / BCRC 17069 / CCUG 31568 / BM 3577 / RP62A).